A 191-amino-acid polypeptide reads, in one-letter code: RNA pyrophosphohydrolase (191 aa).

In terms of domain architecture, Nudix hydrolase spans Gly6–Ser149. The Nudix box motif lies at Gly38–Gly59. Residues Gly162–Arg191 are disordered.

The protein belongs to the Nudix hydrolase family. RppH subfamily. The cofactor is a divalent metal cation.

Its function is as follows. Accelerates the degradation of transcripts by removing pyrophosphate from the 5'-end of triphosphorylated RNA, leading to a more labile monophosphorylated state that can stimulate subsequent ribonuclease cleavage. The polypeptide is RNA pyrophosphohydrolase (Methylococcus capsulatus (strain ATCC 33009 / NCIMB 11132 / Bath)).